The following is a 162-amino-acid chain: uncharacterized protein (162 aa).

The N-terminal stretch at 1–34 (MAREVISTSILMIATVVAVTAAIMVILPAVKDLA) is a signal peptide.

This is an uncharacterized protein from Archaeoglobus fulgidus (strain ATCC 49558 / DSM 4304 / JCM 9628 / NBRC 100126 / VC-16).